Reading from the N-terminus, the 37-residue chain is MKIRASVRKICENCRLIRRRRRVMVVCSNPKHKQKQG.

The protein belongs to the bacterial ribosomal protein bL36 family.

It localises to the plastid. The protein resides in the chloroplast. This Anthoceros angustus (Hornwort) protein is Large ribosomal subunit protein bL36c (rpl36).